The following is a 59-amino-acid chain: Large ribosomal subunit protein uL30 (59 aa).

This sequence belongs to the universal ribosomal protein uL30 family. Part of the 50S ribosomal subunit.

This Photobacterium profundum (strain SS9) protein is Large ribosomal subunit protein uL30.